The primary structure comprises 400 residues: Glycine betaine/proline betaine transport system ATP-binding protein ProV (400 aa).

Positions 29 to 265 (LSKEQILEKT…PANDYVRTFF (237 aa)) constitute an ABC transporter domain. 61–68 (GLSGSGKS) contributes to the ATP binding site. 2 CBS domains span residues 280 to 341 (ARRS…GIEA) and 343 to 400 (LIDD…GNNG).

Belongs to the ABC transporter superfamily. In terms of assembly, the complex is composed of two ATP-binding proteins (ProV), two transmembrane proteins (ProW) and a solute-binding protein (ProX).

It is found in the cell inner membrane. In terms of biological role, part of the ProU ABC transporter complex involved in glycine betaine and proline betaine uptake. Probably responsible for energy coupling to the transport system. The sequence is that of Glycine betaine/proline betaine transport system ATP-binding protein ProV from Salmonella typhimurium (strain LT2 / SGSC1412 / ATCC 700720).